Reading from the N-terminus, the 270-residue chain is Eukaryotic translation initiation factor 3 subunit G-1 (270 aa).

Positions 189-267 (AAIRISNLSE…LILSVEWSKP (79 aa)) constitute an RRM domain.

It belongs to the eIF-3 subunit G family. Component of the eukaryotic translation initiation factor 3 (eIF-3) complex. The eIF-3 complex interacts with pix.

Its subcellular location is the cytoplasm. Its function is as follows. RNA-binding component of the eukaryotic translation initiation factor 3 (eIF-3) complex, which is involved in protein synthesis of a specialized repertoire of mRNAs and, together with other initiation factors, stimulates binding of mRNA and methionyl-tRNAi to the 40S ribosome. The eIF-3 complex specifically targets and initiates translation of a subset of mRNAs involved in cell proliferation. This subunit can bind 18S rRNA. This chain is Eukaryotic translation initiation factor 3 subunit G-1, found in Drosophila ananassae (Fruit fly).